Here is a 304-residue protein sequence, read N- to C-terminus: Agmatinase (304 aa).

The Mn(2+) site is built by His126, Asp149, His151, Asp153, Asp230, and Asp232.

This sequence belongs to the arginase family. Agmatinase subfamily. Mn(2+) serves as cofactor.

It catalyses the reaction agmatine + H2O = urea + putrescine. The protein operates within amine and polyamine biosynthesis; putrescine biosynthesis via agmatine pathway; putrescine from agmatine: step 1/1. Functionally, catalyzes the formation of putrescine from agmatine. The sequence is that of Agmatinase from Edwardsiella ictaluri (strain 93-146).